Here is a 241-residue protein sequence, read N- to C-terminus: Sugar fermentation stimulation protein homolog (241 aa).

It belongs to the SfsA family.

This is Sugar fermentation stimulation protein homolog from Hahella chejuensis (strain KCTC 2396).